Reading from the N-terminus, the 423-residue chain is tRNA(Ile2) 2-agmatinylcytidine synthetase TiaS (423 aa).

The OB DNA-binding region spans 273–347; that stretch reads VIVYGRVVEE…GINIEKIKIL (75 aa).

This sequence belongs to the TiaS family.

The protein resides in the cytoplasm. The enzyme catalyses cytidine(34) in tRNA(Ile2) + agmatine + ATP + H2O = 2-agmatinylcytidine(34) in tRNA(Ile2) + AMP + 2 phosphate + 2 H(+). ATP-dependent agmatine transferase that catalyzes the formation of 2-agmatinylcytidine (agm2C) at the wobble position (C34) of tRNA(Ile2), converting the codon specificity from AUG to AUA. This is tRNA(Ile2) 2-agmatinylcytidine synthetase TiaS from Methanocaldococcus jannaschii (strain ATCC 43067 / DSM 2661 / JAL-1 / JCM 10045 / NBRC 100440) (Methanococcus jannaschii).